Reading from the N-terminus, the 431-residue chain is Na(+)-translocating NADH-quinone reductase subunit F (431 aa).

A helical transmembrane segment spans residues 9 to 29 (FICIASLIFCAIGVILAGVIL). In terms of domain architecture, 2Fe-2S ferredoxin-type spans 39–133 (HPCKLKINDN…DMSLEIEERY (95 aa)). Residues C76, C82, C85, and C117 each coordinate [2Fe-2S] cluster. The FAD-binding FR-type domain maps to 136 to 286 (ASSWEGTVIS…SGPYGESFMK (151 aa)). The catalytic stretch occupies residues 289–413 (DRPLIFLIGG…PLHNSSILKL (125 aa)).

Belongs to the NqrF family. In terms of assembly, composed of six subunits; NqrA, NqrB, NqrC, NqrD, NqrE and NqrF. It depends on [2Fe-2S] cluster as a cofactor. The cofactor is FAD.

The protein localises to the cell inner membrane. The catalysed reaction is a ubiquinone + n Na(+)(in) + NADH + H(+) = a ubiquinol + n Na(+)(out) + NAD(+). In terms of biological role, NQR complex catalyzes the reduction of ubiquinone-1 to ubiquinol by two successive reactions, coupled with the transport of Na(+) ions from the cytoplasm to the periplasm. The first step is catalyzed by NqrF, which accepts electrons from NADH and reduces ubiquinone-1 to ubisemiquinone by a one-electron transfer pathway. The polypeptide is Na(+)-translocating NADH-quinone reductase subunit F (Chlamydia pneumoniae (Chlamydophila pneumoniae)).